The primary structure comprises 617 residues: MRRFLTTLMILLVVLVAGLSALVLLVNPNDFRDYMVKQVAARSGYQLQLDGPLRWHVWPQLSILSGRMSLTAQGASQPLVRADNMRLDVALLPLLSHQLSVKQVMLKGAVIQLTPQTEAVRSEDAPVAPRDNTLPDLSDDRGWSFDISSLKVADSVLVFQHEDDEQVTIRNIRLQMEQDPQHRGSFEFSGRVNRDQRDLTISLNGTVDASDYPHDLTAAIEQINWQLQGADLPKQGIQGQGSFQAQWQESHKRLSFNQISLTANDSTLSGQAQVTLTEKPEWQLRLQFPQLNLDNLIPLNETANGENGAAQQGQSQSTLPRPVISSRIDEPAYQGLQGFTADILLQASNVRWRGMNFTDVATQMTNKSGLLEITQLQGKLNGGQVSLPGTLDATSINPRINFQPRLENVEIGTILKAFNYPISLTGKMSLAGDFSGADIDADAFRHNWQGQAHVEMTDTRMEGMNFQQMIQQAVERNGGDVKAAENFDNVTRLDRFTTDLTLKDGVVTLNDMQGQSPVLALTGEGMLNLADQTCDTQFDIRVVGGWNGESKLIDFLKETPVPLRVYGNWQQLNYSLQVDQLLRKHLQDEAKRRLNDWAERNKDSRNGKDVKKLLEKM.

Residues 1–3 (MRR) lie on the Cytoplasmic side of the membrane. The chain crosses the membrane as a helical span at residues 4–24 (FLTTLMILLVVLVAGLSALVL). Topologically, residues 25–617 (LVNPNDFRDY…KDVKKLLEKM (593 aa)) are periplasmic. Polar residues predominate over residues 302–319 (TANGENGAAQQGQSQSTL). The disordered stretch occupies residues 302-321 (TANGENGAAQQGQSQSTLPR).

The protein belongs to the AsmA family.

It is found in the cell inner membrane. Its function is as follows. Could be involved in the assembly of outer membrane proteins. May indirectly influence the assembly of outer membrane proteins, potentially by altering outer membrane fluidity. Inhibits the assembly of mutant forms of outer membrane protein F (OmpF). The chain is Protein AsmA from Escherichia coli (strain K12).